Here is a 272-residue protein sequence, read N- to C-terminus: 4-hydroxy-tetrahydrodipicolinate reductase (272 aa).

Residues 10-15 (GAGGRM), Glu-36, 100-102 (GTT), and 124-127 (SGNM) contribute to the NAD(+) site. The active-site Proton donor/acceptor is His-157. Residue His-158 participates in (S)-2,3,4,5-tetrahydrodipicolinate binding. The Proton donor role is filled by Lys-161. A (S)-2,3,4,5-tetrahydrodipicolinate-binding site is contributed by 167-168 (GT).

This sequence belongs to the DapB family.

Its subcellular location is the cytoplasm. The catalysed reaction is (S)-2,3,4,5-tetrahydrodipicolinate + NAD(+) + H2O = (2S,4S)-4-hydroxy-2,3,4,5-tetrahydrodipicolinate + NADH + H(+). It carries out the reaction (S)-2,3,4,5-tetrahydrodipicolinate + NADP(+) + H2O = (2S,4S)-4-hydroxy-2,3,4,5-tetrahydrodipicolinate + NADPH + H(+). It participates in amino-acid biosynthesis; L-lysine biosynthesis via DAP pathway; (S)-tetrahydrodipicolinate from L-aspartate: step 4/4. Functionally, catalyzes the conversion of 4-hydroxy-tetrahydrodipicolinate (HTPA) to tetrahydrodipicolinate. The sequence is that of 4-hydroxy-tetrahydrodipicolinate reductase from Afipia carboxidovorans (strain ATCC 49405 / DSM 1227 / KCTC 32145 / OM5) (Oligotropha carboxidovorans).